We begin with the raw amino-acid sequence, 470 residues long: Nuclear receptor subfamily 0 group B member 1 (470 aa).

3 tandem repeats follow at residues 1–67 (MAGE…YRCC), 68–133 (FCGK…YRCC), and 134–200 (FCGE…YRCC). The tract at residues 1–253 (MAGENHQWQG…RPVALKNPQV (253 aa)) is 4 X 67 AA tandem repeats. 3 short sequence motifs (LXXLL motif) span residues 13 to 17 (LYNML), 80 to 84 (LYSML), and 146 to 150 (LYSLL). Residues 201–253 (FCGEDHPQQGSTLYCMPTSTNQAQAAPEERPRAPWWDTSSGALRPVALKNPQV) form a 4; truncated repeat. In terms of domain architecture, NR LBD spans 205–469 (DHPQQGSTLY…DMMLEMLCTK (265 aa)). The AF-2 motif signature appears at 461–466 (MMLEML).

It belongs to the nuclear hormone receptor family. NR0 subfamily. Homodimer. Interacts with NR5A1, NR5A2, NR0B2 and with COPS2. Interacts with ESRRB; represses ESRRB activity at the GATA6 promoter.

It is found in the nucleus. Its subcellular location is the cytoplasm. Functionally, nuclear receptor that lacks a DNA-binding domain and acts as a corepressor that inhibits the transcriptional activity of other nuclear receptors through heterodimeric interactions. Component of a cascade required for the development of the hypothalamic-pituitary-adrenal-gonadal axis. May also have a role in the development of the embryo and in the maintenance of embryonic stem cell pluripotency. This is Nuclear receptor subfamily 0 group B member 1 (NR0B1) from Macaca mulatta (Rhesus macaque).